Reading from the N-terminus, the 222-residue chain is Vespryn (222 aa).

The N-terminal stretch at M1 to Q44 is a signal peptide. The propeptide occupies E45–A52. Positions S53–L159 constitute a B30.2/SPRY domain. Residues R160–L222 constitute a propeptide that is removed on maturation. N195 carries an N-linked (GlcNAc...) asparagine glycan.

The protein belongs to the ohanin/vespryn family. In terms of tissue distribution, expressed by the venom gland.

It is found in the secreted. In terms of biological role, neurotoxin that produces dose-dependent hypolocomotion and hyperalgesia in mice. May directly act on the central nervous system, as it is 6500-fold more potent when administered intracerebroventricularly than intraperitoneal. In Crotalus adamanteus (Eastern diamondback rattlesnake), this protein is Vespryn.